We begin with the raw amino-acid sequence, 131 residues long: MSEDLSPTSSRVDLSNPHGFTKEGVDLSKLSPQELKLYKMYGKLPSKKDLLRHKMQDRQYFDSGDYALKKAGVIKSDDVIVNNSSNNLPVTNPSGLRESIIRRRMSSSSGGDSISRQGSISSGPPPRSPNK.

Positions M1–D13 are enriched in polar residues. The disordered stretch occupies residues M1–D26. Residue S2 is modified to N-acetylserine. 4 positions are modified to phosphoserine: S6, S63, S108, and S119. A disordered region spans residues V81–K131. Low complexity predominate over residues S106–S122.

It belongs to the endosulfine family. Post-translationally, phosphorylated by RIM15.

The protein resides in the cytoplasm. The protein localises to the nucleus. Required for TORC1 to properly control gene expression and chronological life span. Plays an essential role in initiation of the G0 program by preventing the degradation of specific nutrient-regulated mRNAs via the 5'-3' mRNA decay pathway. This is mRNA stability protein IGO2 (IGO2) from Saccharomyces cerevisiae (strain ATCC 204508 / S288c) (Baker's yeast).